The following is a 517-amino-acid chain: GMP synthase [glutamine-hydrolyzing] (517 aa).

The 192-residue stretch at 11-202 (KIIVLDYGSQ…AFGVCGAQDN (192 aa)) folds into the Glutamine amidotransferase type-1 domain. The active-site Nucleophile is the cysteine 88. Catalysis depends on residues histidine 176 and glutamate 178. Residues 203–392 (WTMNDFIDMQ…LGMPYELVWR (190 aa)) form the GMPS ATP-PPase domain. 230–236 (SGGVDSS) is an ATP binding site.

Homodimer.

The catalysed reaction is XMP + L-glutamine + ATP + H2O = GMP + L-glutamate + AMP + diphosphate + 2 H(+). It functions in the pathway purine metabolism; GMP biosynthesis; GMP from XMP (L-Gln route): step 1/1. Catalyzes the synthesis of GMP from XMP. This chain is GMP synthase [glutamine-hydrolyzing], found in Latilactobacillus sakei subsp. sakei (strain 23K) (Lactobacillus sakei subsp. sakei).